The primary structure comprises 942 residues: MLKFLTPTAYASHHVTPATRFRSTPVKNLLFKQLTLLTGWNRSSYELGRRSFSSDLDSDTKSSTTTVSAKPHLDDCLTVIALPLPHKPLIPGFYMPIYVKDPKVLAALQESRRQQAPYAGAFLLKDDASSDSSSSSETENILEKLKGKELINRIHEVGTLAQISSIQGEQVILIGHRQLRITEMVSESEDPLTVKVDHLKDKPYDKDDDVIKATYFQVMSTLRDVLKTTSLWRDHVRTYTQACSLHIWHCLRHIGEFNYPKLADFGAGISGANKHQNQGVLEELDVHKRLELTLELVKKEVEINKIQESIAKAVEEKFSGDRRRIILKEQINAIKKELGGETDSKSALSEKFRGRIDPIKDKIPGHVLKVIEEELKKLQLLETSSSEFDVTCNYLDWLTVLPWGNFSDENFNVLRAEKILDEDHYGLSDVKERILEFIAVGGLRGTSQGKIICLSGPTGVGKTSIGRSIARALDRKFFRFSVGGLSDVAEIKGHRRTYIGAMPGKMVQCLKNVGTENPLVLIDEIDKLGVRGHHGDPASAMLELLDPEQNANFLDHYLDVPIDLSKVLFVCTANVTDTIPGPLLDRMEVITLSGYITDEKMHIARDYLEKTARRDCGIKPEQVDVSDAAFLSLIEHYCREAGVRNLQKQIEKIFRKIALKLVRKAASTEVPRISDDVTTDTEETKSLAKTDLESPETSAEGSTVLTDELATGDPTESTTEQSGEVAETVEKYMIDESNLSDYVGKPVFQEEKIYEQTPVGVVMGLAWTSMGGSTLYIETTFVEEGEGKGGLHITGRLGDVMKESAEIAHTVARRIMLEKEPENKLFANSKLHLHVPAGATPKDGPSAGCTMITSLLSLALKKPVRKDLAMTGEVTLTGRILAIGGVKEKTIAARRSQVKVIIFPEANRRDFDELARNVKEGLEVHFVDEYEQIFELAFGYDH.

Ser-54 carries the post-translational modification Phosphoserine. The 223-residue stretch at 79–301 (VIALPLPHKP…LTLELVKKEV (223 aa)) folds into the Lon N-terminal domain. 456-463 (GPTGVGKT) is a binding site for ATP. Residues 673–725 (ISDDVTTDTEETKSLAKTDLESPETSAEGSTVLTDELATGDPTESTTEQSGEV) form a disordered region. The segment covering 682-692 (EETKSLAKTDL) has biased composition (basic and acidic residues). Over residues 695–705 (PETSAEGSTVL) the composition is skewed to polar residues. One can recognise a Lon proteolytic domain in the interval 756–940 (QTPVGVVMGL…EQIFELAFGY (185 aa)). Active-site residues include Ser-846 and Lys-889.

The protein belongs to the peptidase S16 family. As to quaternary structure, homohexamer or homoheptamer. Organized in a ring with a central cavity.

The protein localises to the mitochondrion matrix. It localises to the plastid. Its subcellular location is the chloroplast thylakoid membrane. It catalyses the reaction Hydrolysis of proteins in presence of ATP.. Its function is as follows. ATP-dependent serine protease that mediates the selective degradation of misfolded, unassembled or oxidatively damaged polypeptides as well as certain short-lived regulatory proteins in the mitochondrial matrix. May also have a chaperone function in the assembly of inner membrane protein complexes. Participates in the regulation of mitochondrial gene expression and in the maintenance of the integrity of the mitochondrial genome. Binds to mitochondrial DNA in a site-specific manner. In Arabidopsis thaliana (Mouse-ear cress), this protein is Lon protease homolog 4, chloroplastic/mitochondrial (LON4).